The following is a 194-amino-acid chain: RNA polymerase II subunit A C-terminal domain phosphatase SSU72 like protein 3 (194 aa).

This sequence belongs to the SSU72 phosphatase family.

Its subcellular location is the nucleus. It carries out the reaction O-phospho-L-seryl-[protein] + H2O = L-seryl-[protein] + phosphate. It catalyses the reaction O-phospho-L-threonyl-[protein] + H2O = L-threonyl-[protein] + phosphate. In terms of biological role, protein phosphatase that catalyzes the dephosphorylation of the C-terminal domain of RNA polymerase II. Plays a role in RNA processing and termination. The sequence is that of RNA polymerase II subunit A C-terminal domain phosphatase SSU72 like protein 3 from Homo sapiens (Human).